A 349-amino-acid chain; its full sequence is Glucose 1-dehydrogenase 1 (349 aa).

Cys39 is a binding site for Zn(2+). Residue Thr41 coordinates substrate. Positions 64 and 65 each coordinate Zn(2+). Glu110 and Glu146 together coordinate substrate. Glu146 contributes to the Zn(2+) binding site. NADP(+) contacts are provided by residues 178–181 (AGPI), 260–262 (LGV), and 289–291 (SVN). Asn291 serves as a coordination point for substrate.

This sequence belongs to the zinc-containing alcohol dehydrogenase family. Glucose 1-dehydrogenase subfamily. Zn(2+) is required as a cofactor.

The enzyme catalyses D-glucose + NAD(+) = D-glucono-1,5-lactone + NADH + H(+). It catalyses the reaction D-glucose + NADP(+) = D-glucono-1,5-lactone + NADPH + H(+). Catalyzes the NAD(P)(+)-dependent oxidation of D-glucose to D-gluconate via gluconolactone. Can utilize both NAD(+) and NADP(+) as electron acceptor. Is involved in the degradation of glucose through a non-phosphorylative variant of the Entner-Doudoroff pathway. The protein is Glucose 1-dehydrogenase 1 of Caldivirga maquilingensis (strain ATCC 700844 / DSM 13496 / JCM 10307 / IC-167).